The primary structure comprises 933 residues: Clumping factor A (933 aa).

The signal sequence occupies residues Met-1 to Ala-39. The short motif at His-9–Ser-20 is the YSIRK-G/S signaling motif element. 2 disordered regions span residues Ser-34–Asp-200 and Phe-529–Glu-904. Residues Ser-40–Pro-542 are ligand binding A region. Residues Ser-47–Ala-65 are compositionally biased toward low complexity. Residues Thr-71–Asn-105 are compositionally biased toward polar residues. Composition is skewed to low complexity over residues Ala-106–Gln-132 and Asn-143–Ser-162. Polar residues predominate over residues Pro-163–Asp-200. Residues Gln-547 to Pro-565 are compositionally biased toward acidic residues. Positions Gly-566–Asp-598 are enriched in low complexity. Residues Ser-599–Ser-861 show a composition bias toward acidic residues. Over residues Asp-862–Gly-880 the composition is skewed to low complexity. The span at Asn-887–Leu-896 shows a compositional bias: basic and acidic residues. The short motif at Leu-896 to Gly-900 is the LPXTG sorting signal element. Position 899 is a pentaglycyl murein peptidoglycan amidated threonine (Thr-899). The propeptide at Gly-900 to Lys-933 is removed by sortase.

It belongs to the serine-aspartate repeat-containing protein (SDr) family.

It localises to the secreted. Its subcellular location is the cell wall. Cell surface-associated protein implicated in virulence. Promotes bacterial attachment exclusively to the gamma-chain of human fibrinogen. Induces formation of bacterial clumps. The sequence is that of Clumping factor A (clfA) from Staphylococcus aureus (strain COL).